Reading from the N-terminus, the 541-residue chain is Membrane protein insertase YidC (541 aa).

A helical transmembrane segment spans residues 6–26 (SLLVLALIFISFLVYQQWQLD). The tract at residues 34-56 (EQTTSITATSDVPASSPSNSQAI) is disordered. 4 helical membrane passes run 337–357 (FWLLTFIQGIVSNWGLAIICV), 416–436 (LGGCLPILLQMPIFIALYWTF), 454–474 (LSAQDPYYILPILMGISMFLL), and 495–515 (PLIFMVFFLWFPSGLVLYWLV).

The protein belongs to the OXA1/ALB3/YidC family. Type 1 subfamily. Interacts with the Sec translocase complex via SecD. Specifically interacts with transmembrane segments of nascent integral membrane proteins during membrane integration.

The protein localises to the cell inner membrane. Functionally, required for the insertion and/or proper folding and/or complex formation of integral membrane proteins into the membrane. Involved in integration of membrane proteins that insert both dependently and independently of the Sec translocase complex, as well as at least some lipoproteins. Aids folding of multispanning membrane proteins. The chain is Membrane protein insertase YidC from Haemophilus influenzae (strain PittEE).